Reading from the N-terminus, the 1214-residue chain is ATP-dependent helicase/nuclease subunit A (1214 aa).

The 457-residue stretch at 27–483 folds into the UvrD-like helicase ATP-binding domain; it reads HKRTAQQIEA…ILLKENFRSQ (457 aa). 48–55 is a binding site for ATP; that stretch reads ASAGSGKT. The UvrD-like helicase C-terminal domain occupies 512 to 800; it reads QLVAGSEAQK…NLMTIHKSKG (289 aa).

It belongs to the helicase family. AddA subfamily. In terms of assembly, heterodimer of AddA and AddB/RexB. It depends on Mg(2+) as a cofactor.

It catalyses the reaction Couples ATP hydrolysis with the unwinding of duplex DNA by translocating in the 3'-5' direction.. The enzyme catalyses ATP + H2O = ADP + phosphate + H(+). In terms of biological role, the heterodimer acts as both an ATP-dependent DNA helicase and an ATP-dependent, dual-direction single-stranded exonuclease. Recognizes the chi site generating a DNA molecule suitable for the initiation of homologous recombination. The AddA nuclease domain is required for chi fragment generation; this subunit has the helicase and 3' -&gt; 5' nuclease activities. The polypeptide is ATP-dependent helicase/nuclease subunit A (Streptococcus equi subsp. zooepidemicus (strain MGCS10565)).